Consider the following 463-residue polypeptide: Cysteine--tRNA ligase (463 aa).

Cys33 provides a ligand contact to Zn(2+). Positions 35-45 match the 'HIGH' region motif; sequence PTVYDFAHIGN. Residues Cys221, His246, and Glu250 each coordinate Zn(2+). Positions 279–283 match the 'KMSKS' region motif; the sequence is KMSKS. Lys282 provides a ligand contact to ATP.

This sequence belongs to the class-I aminoacyl-tRNA synthetase family. Monomer. The cofactor is Zn(2+).

It is found in the cytoplasm. It carries out the reaction tRNA(Cys) + L-cysteine + ATP = L-cysteinyl-tRNA(Cys) + AMP + diphosphate. In Rhizobium leguminosarum bv. trifolii (strain WSM2304), this protein is Cysteine--tRNA ligase.